Reading from the N-terminus, the 142-residue chain is Hemoglobin subunit alpha-1 (142 aa).

Positions 2–142 (LLSADDKKHI…VSSVLTSKYR (141 aa)) constitute a Globin domain. H59 lines the O2 pocket. A heme b-binding site is contributed by H88.

Belongs to the globin family. As to quaternary structure, heterotetramer of two alpha chains and two beta chains. In terms of tissue distribution, red blood cells.

Involved in oxygen transport from the lung to the various peripheral tissues. This chain is Hemoglobin subunit alpha-1 (hba1), found in Xenopus borealis (Kenyan clawed frog).